The primary structure comprises 1910 residues: A disintegrin and metalloproteinase with thrombospondin motifs 20 (1910 aa).

The N-terminal stretch at 1 to 21 (MWVAKWLTGLLYHLSLFITRS) is a signal peptide. Residues 22-253 (WEVDFHPRQE…DERRHSRKKR (232 aa)) constitute a propeptide that is removed on maturation. N-linked (GlcNAc...) asparagine glycosylation is found at N92 and N191. Positions 259–467 (RYIEIMVTAD…GYGECLLDKP (209 aa)) constitute a Peptidase M12B domain. Intrachain disulfides connect C334/C387, C363/C369, C381/C462, C419/C446, C489/C511, C500/C521, C506/C540, C534/C545, C568/C605, C572/C610, and C583/C595. H403 is a Zn(2+) binding site. E404 is an active-site residue. Zn(2+) is bound by residues H407 and H413. N-linked (GlcNAc...) asparagine glycosylation is present at N445. A Disintegrin domain is found at 468–555 (DEEIYNLPSE…VNKETETRPV (88 aa)). The TSP type-1 1 domain maps to 556–611 (NGEWGPWEPYSSCSRTCGGGIESATRRCNRPEPRNGGNYCVGRRMKFRSCNTDSCP). Residues N702, N717, N728, N809, and N870 are each glycosylated (N-linked (GlcNAc...) asparagine). The interval 724–846 (TGVFNSSHYG…FNIPLEERSD (123 aa)) is spacer. TSP type-1 domains are found at residues 846 to 904 (DMFT…NTDC), 905 to 961 (ELRW…QELC), 966 to 1023 (VFTR…FSCP), 1024 to 1073 (SWAA…SPCE), 1076 to 1135 (TCAS…TPCS), 1152 to 1206 (KMAQ…DCFT), 1207 to 1264 (PCGE…AACP), 1304 to 1356 (RGNQ…QCGP), 1358 to 1416 (PCPQ…HACP), 1417 to 1475 (ADVS…VRCP), 1476 to 1531 (SWKA…QDCV), 1535 to 1588 (GMER…NPPC), 1589 to 1652 (NYIV…INSC), and 1654 to 1710 (HLAT…NDCK). N1061 carries an N-linked (GlcNAc...) asparagine glycan. A glycan (N-linked (GlcNAc...) asparagine) is linked at N1456. N-linked (GlcNAc...) asparagine glycosylation is found at N1542 and N1572. Residues 1711-1910 (SFTTCKEIQV…MTTGLPIQVI (200 aa)) enclose the GON domain. Residues N1763, N1781, and N1852 are each glycosylated (N-linked (GlcNAc...) asparagine).

It depends on Zn(2+) as a cofactor. The precursor is cleaved by a furin endopeptidase. In terms of processing, glycosylated. Can be O-fucosylated by POFUT2 on a serine or a threonine residue found within the consensus sequence C1-X(2)-(S/T)-C2-G of the TSP type-1 repeat domains where C1 and C2 are the first and second cysteine residue of the repeat, respectively. Fucosylated repeats can then be further glycosylated by the addition of a beta-1,3-glucose residue by the glucosyltransferase, B3GALTL. Fucosylation mediates the efficient secretion of ADAMTS family members. Can also be C-glycosylated with one or two mannose molecules on tryptophan residues within the consensus sequence W-X-X-W of the TPRs, and N-glycosylated. These other glycosylations can also facilitate secretion. As to expression, very sparingly expressed, although is detected at low levels in testis, prostate, ovary, heart, placenta, lung and pancreas. Overexpressed in several brain, colon and breast carcinomas.

The protein localises to the secreted. It is found in the extracellular space. It localises to the extracellular matrix. In terms of biological role, may play a role in tissue-remodeling process occurring in both normal and pathological conditions. May have a protease-independent function in the transport from the endoplasmic reticulum to the Golgi apparatus of secretory cargos, mediated by the GON domain. The protein is A disintegrin and metalloproteinase with thrombospondin motifs 20 (ADAMTS20) of Homo sapiens (Human).